We begin with the raw amino-acid sequence, 428 residues long: 3-phosphoshikimate 1-carboxyvinyltransferase (428 aa).

Residues Lys23, Ser24, and Arg28 each contribute to the 3-phosphoshikimate site. Lys23 lines the phosphoenolpyruvate pocket. Phosphoenolpyruvate is bound by residues Gly97 and Arg125. Residues Ser170, Ser171, Gln172, Ser198, Asp314, Asn337, and Lys341 each contribute to the 3-phosphoshikimate site. Gln172 lines the phosphoenolpyruvate pocket. Catalysis depends on Asp314, which acts as the Proton acceptor. Residues Arg345, Arg387, and Lys412 each coordinate phosphoenolpyruvate.

This sequence belongs to the EPSP synthase family. In terms of assembly, monomer.

The protein resides in the cytoplasm. It carries out the reaction 3-phosphoshikimate + phosphoenolpyruvate = 5-O-(1-carboxyvinyl)-3-phosphoshikimate + phosphate. It participates in metabolic intermediate biosynthesis; chorismate biosynthesis; chorismate from D-erythrose 4-phosphate and phosphoenolpyruvate: step 6/7. Its function is as follows. Catalyzes the transfer of the enolpyruvyl moiety of phosphoenolpyruvate (PEP) to the 5-hydroxyl of shikimate-3-phosphate (S3P) to produce enolpyruvyl shikimate-3-phosphate and inorganic phosphate. The protein is 3-phosphoshikimate 1-carboxyvinyltransferase of Hamiltonella defensa subsp. Acyrthosiphon pisum (strain 5AT).